Here is a 359-residue protein sequence, read N- to C-terminus: 3-dehydroquinate synthase (359 aa).

NAD(+) is bound by residues 69-74 (DGEAHK), 103-107 (GVIGD), 127-128 (TT), Lys-140, Lys-149, and 167-170 (TLDT). Zn(2+)-binding residues include Glu-182, His-245, and His-262.

It belongs to the sugar phosphate cyclases superfamily. Dehydroquinate synthase family. The cofactor is Co(2+). Requires Zn(2+) as cofactor. NAD(+) is required as a cofactor.

The protein resides in the cytoplasm. The catalysed reaction is 7-phospho-2-dehydro-3-deoxy-D-arabino-heptonate = 3-dehydroquinate + phosphate. The protein operates within metabolic intermediate biosynthesis; chorismate biosynthesis; chorismate from D-erythrose 4-phosphate and phosphoenolpyruvate: step 2/7. Its function is as follows. Catalyzes the conversion of 3-deoxy-D-arabino-heptulosonate 7-phosphate (DAHP) to dehydroquinate (DHQ). The polypeptide is 3-dehydroquinate synthase (Methylococcus capsulatus (strain ATCC 33009 / NCIMB 11132 / Bath)).